Here is an 87-residue protein sequence, read N- to C-terminus: Small ribosomal subunit protein bS18 (87 aa).

This sequence belongs to the bacterial ribosomal protein bS18 family. As to quaternary structure, part of the 30S ribosomal subunit. Forms a tight heterodimer with protein bS6.

Its function is as follows. Binds as a heterodimer with protein bS6 to the central domain of the 16S rRNA, where it helps stabilize the platform of the 30S subunit. This is Small ribosomal subunit protein bS18 from Sulfurovum sp. (strain NBC37-1).